The chain runs to 656 residues: MNDVSQKAEILLSSSKPVPKSYVPKLGKGDVKDKFEAMQRAREERNQRRSRDEKQRRKEQYIREREWNRRKQEIKDMLASDEEEEPSKVEKAYVPKLTGTVKGKFDEMEKHRQEEQRKRTEEERKRRIEQDLLEKRKMQRELAKRAEQEGDDSLLITVVPAKSYRAAANRKDPEDLDREHRNGRVSQEEEKTRHEEECRALKEAKCLSLVMDDETEAKKESRFPGKLKSTFEELERQRQENRKKQAEEEARRRLEEERRAFEEARRNMVNEEDESQDTETVFKEYRPGKLRLSFEEIERQRREEEKRKAEEEARRRMEEEKKAFAEARRSMVLDDDSPEIYKAVSQESLTPGKLEINFEQLLRQKMEEERRRTEEERRQKLEMEKQEFEQLRQEMGKEEEENESFGLSREYEELIKLKRSGSIQAKNLKSKFEKIGQLSEKEVQKKIEEERAKRRAIDLEIKEREAENFHEDDDVDVKPAKKSESPFTHKVNMKARFEQMAKARQEEEQRRIEEQKLLRMQFEQKEIDAALQKKREDDEEEEGSIVNGSTTEDEEQTRSGAPWFKKPLRNTSVVDSEPVRFTVKVTGEPKPEVTWWFEGELLQDGEDYQYIERGETYCLYLPETFPEDGGEYMCKAVNSKGSAASTCILTIEMDDY.

3 disordered regions span residues 1–131, 165–198, and 215–284; these read MNDV…IEQD, RAAA…EEEC, and TEAK…VFKE. A compositionally biased stretch (low complexity) spans 11 to 26; sequence LLSSSKPVPKSYVPKL. A compositionally biased stretch (basic and acidic residues) spans 27-78; it reads GKGDVKDKFEAMQRAREERNQRRSRDEKQRRKEQYIREREWNRRKQEIKDML. S80 carries the post-translational modification Phosphoserine. Basic and acidic residues-rich tracts occupy residues 103 to 131, 169 to 198, and 216 to 269; these read GKFD…IEQD, NRKD…EEEC, and EAKK…RNMV. S221, S330, S337, and S345 each carry phosphoserine. T350 carries the phosphothreonine modification. Disordered stretches follow at residues 468–492 and 529–564; these read NFHE…HKVN and AALQ…APWF. Residues S544 and S549 each carry the phosphoserine modification. The residue at position 551 (T551) is a Phosphothreonine. Residues 562–650 enclose the Ig-like domain; it reads PWFKKPLRNT…GSAASTCILT (89 aa).

Interacts with F-actin. In terms of tissue distribution, expressed in brain, testis, spleen and fibroblasts (at protein level). Not detected in liver, kidney or epithelial cells (at protein level).

Its subcellular location is the cytoplasm. It localises to the cytoskeleton. It is found in the cell junction. The protein localises to the adherens junction. The protein resides in the myofibril. Its subcellular location is the sarcomere. It localises to the z line. Functionally, involved in regulating cell migration through association with the actin cytoskeleton. Has an essential role in the maintenance of Z line and sarcomere integrity. The sequence is that of Nexilin from Rattus norvegicus (Rat).